The following is a 129-amino-acid chain: MTEPVRGSSPSSDSARVPAELEAFFRIADRWRLSADDQIKLLGSPGRSTFFKWKKAGGTLPADTVERLSHILSIWKALRILFTIEERADDWIRRPNDFFDGASALDTMLQGRVVDIYRVRQYLDAQRGG.

This is an uncharacterized protein from Sinorhizobium fredii (strain NBRC 101917 / NGR234).